The chain runs to 306 residues: Putative secretory carrier-associated membrane protein 1 (306 aa).

The disordered stretch occupies residues 1–60 (MAGRYDSNPFEEDDVNPFSEQARGKAGGQPSYGGGAFYMPNPRNVPSMSSNSRLSPLPPE). The Cytoplasmic portion of the chain corresponds to 1–141 (MAGRYDSNPF…EIPSHLQRMQ (141 aa)). The span at 25–36 (KAGGQPSYGGGA) shows a compositional bias: gly residues. Polar residues predominate over residues 44–54 (NVPSMSSNSRL). Residues 72 to 109 (LDSSKDLKNREKELQAREAELNKREKELKRREEAAARA) are a coiled coil. The next 4 membrane-spanning stretches (helical) occupy residues 142–162 (YVAF…VIAV), 174–194 (IWLL…VLWY), 209–229 (FGLF…SAVA), and 257–277 (IFYF…IWVI). The Cytoplasmic portion of the chain corresponds to 278–306 (QQVYMYFRGSGKAAEMKRDATRGAMRAAF).

It belongs to the SCAMP family.

Its subcellular location is the cell membrane. It is found in the cytoplasmic vesicle. The protein resides in the secretory vesicle membrane. Its function is as follows. Probably involved in membrane trafficking. The polypeptide is Putative secretory carrier-associated membrane protein 1 (SCAMP1) (Oryza sativa subsp. indica (Rice)).